The chain runs to 252 residues: Ubiquinone biosynthesis O-methyltransferase (252 aa).

Residues Arg-36, Gly-60, Asp-81, and Leu-123 each coordinate S-adenosyl-L-methionine.

This sequence belongs to the methyltransferase superfamily. UbiG/COQ3 family.

It catalyses the reaction a 3-demethylubiquinol + S-adenosyl-L-methionine = a ubiquinol + S-adenosyl-L-homocysteine + H(+). The enzyme catalyses a 3-(all-trans-polyprenyl)benzene-1,2-diol + S-adenosyl-L-methionine = a 2-methoxy-6-(all-trans-polyprenyl)phenol + S-adenosyl-L-homocysteine + H(+). The protein operates within cofactor biosynthesis; ubiquinone biosynthesis. Its function is as follows. O-methyltransferase that catalyzes the 2 O-methylation steps in the ubiquinone biosynthetic pathway. In Rickettsia prowazekii (strain Madrid E), this protein is Ubiquinone biosynthesis O-methyltransferase.